Consider the following 733-residue polypeptide: MTPLPERAAALPGIDDAVLHAVATGSYHDPHSVLGQHQVAAAGIADPVTVIRTLRPLAEAVFAVLPTGAYLELAHLAHGIWQGVDIAGPGAYEIEARYADGSAWSADDPYRFLPTIGELDLHLIREGRHERLWTALGARLRDLGGVTGTAFTVWAPHARAVRVVGDFNGWDGTLHSLRNMGSSGVWELFVPGVGEGAIYKFDLLAQSGDWVRKIDPMAQLAETPPDTASRIAVSRHEWQDGEWMRRRAASDPHTGPMSIYELHFGSWRPDLGYREAADQLIDYLGALGYTHVEFLPLAEHPFGGSWGYQVTGYYAPTSRFGSPDDLKYLIDRLHRAGIGVLLDWVPGHFPKDDWALARFDGQPLYEHADPRRGEHADWGTYVFDYGNSQVRNFLVANALYWLEEFHIDGLRVDAVASMLYLDYSRDADGWEPNIHGGRENLEAIAFLQEVTATAYKRNPGTIVIAEESTSYPGVTAPTSSGGLGFGLKWNMGWMHDSLQYIREDPLYRSWHHSRITFSFVYAWSESFLLPISHDEVVHGKGSLLGKMPGDHWQQLANMRAYLAFMWAHPGKQLLFMGQEFGQPSEWSEERGLDWWILDQPAHRGLWNLVCELNAVYRGAPALWAHDNDPSGFEWLDGSDAAGNVLAFLRKDGRGEPIAVILNFSGAPHTEYRVGLPFAGGWEELLNTDADVFGGSGVGNFGGVTAVEEPWMGSPASAVLTLPPLGALFLKTGR.

Asp-413 serves as the catalytic Nucleophile. Glu-466 functions as the Proton donor in the catalytic mechanism.

This sequence belongs to the glycosyl hydrolase 13 family. GlgB subfamily. In terms of assembly, monomer.

It carries out the reaction Transfers a segment of a (1-&gt;4)-alpha-D-glucan chain to a primary hydroxy group in a similar glucan chain.. The protein operates within glycan biosynthesis; glycogen biosynthesis. In terms of biological role, catalyzes the formation of the alpha-1,6-glucosidic linkages in glycogen by scission of a 1,4-alpha-linked oligosaccharide from growing alpha-1,4-glucan chains and the subsequent attachment of the oligosaccharide to the alpha-1,6 position. The chain is 1,4-alpha-glucan branching enzyme GlgB from Leifsonia xyli subsp. xyli (strain CTCB07).